Consider the following 270-residue polypeptide: MSKIAKTAIISPKAEINKGVEIGEFCVIGDGVKLDEGVKLHNNVTLQGHTFIGKNTEIFPFAVLGTQPQDLKYKGEYSELIVGEDNLIREFCMINPGTEGGIKKTLIGDKNLLMAYVHVAHDCVIGSHCILANGVTLAGHIEIGDYVNIGGLTAIHQFVRIAKGCMIAGKSALGKDVPPYCTVEGNRAFIRGLNRHRMRQLLESKDIDFIYALYKRLFRPIPSLRESAKLELEEHANNPFVKEICSFILASSRGVAYKSSEYSSEEKQEE.

The protein belongs to the transferase hexapeptide repeat family. LpxA subfamily. In terms of assembly, homotrimer.

The protein resides in the cytoplasm. The catalysed reaction is a (3R)-hydroxyacyl-[ACP] + UDP-N-acetyl-alpha-D-glucosamine = a UDP-3-O-[(3R)-3-hydroxyacyl]-N-acetyl-alpha-D-glucosamine + holo-[ACP]. The protein operates within glycolipid biosynthesis; lipid IV(A) biosynthesis; lipid IV(A) from (3R)-3-hydroxytetradecanoyl-[acyl-carrier-protein] and UDP-N-acetyl-alpha-D-glucosamine: step 1/6. Involved in the biosynthesis of lipid A, a phosphorylated glycolipid that anchors the lipopolysaccharide to the outer membrane of the cell. The sequence is that of Acyl-[acyl-carrier-protein]--UDP-N-acetylglucosamine O-acyltransferase from Helicobacter pylori (strain G27).